Consider the following 53-residue polypeptide: uncharacterized protein (53 aa).

Residues 4 to 23 (STLIIIASNVVTVFVSVAVN) form a helical membrane-spanning segment. The stretch at 24–50 (RTDISWLKQRLISLEERINKLGEKHVF) forms a coiled coil.

Its subcellular location is the host membrane. This is an uncharacterized protein from Pseudoalteromonas phage PM2 (Bacteriophage PM2).